We begin with the raw amino-acid sequence, 208 residues long: Large ribosomal subunit protein uL4 (208 aa).

The interval 45 to 78 (RQGTAKSKERSEMSGSTRKLGRQKGSGGARRGDI) is disordered.

It belongs to the universal ribosomal protein uL4 family. Part of the 50S ribosomal subunit.

Functionally, one of the primary rRNA binding proteins, this protein initially binds near the 5'-end of the 23S rRNA. It is important during the early stages of 50S assembly. It makes multiple contacts with different domains of the 23S rRNA in the assembled 50S subunit and ribosome. Its function is as follows. Forms part of the polypeptide exit tunnel. In Azobacteroides pseudotrichonymphae genomovar. CFP2, this protein is Large ribosomal subunit protein uL4.